The primary structure comprises 160 residues: SsrA-binding protein (160 aa).

It belongs to the SmpB family.

Its subcellular location is the cytoplasm. Its function is as follows. Required for rescue of stalled ribosomes mediated by trans-translation. Binds to transfer-messenger RNA (tmRNA), required for stable association of tmRNA with ribosomes. tmRNA and SmpB together mimic tRNA shape, replacing the anticodon stem-loop with SmpB. tmRNA is encoded by the ssrA gene; the 2 termini fold to resemble tRNA(Ala) and it encodes a 'tag peptide', a short internal open reading frame. During trans-translation Ala-aminoacylated tmRNA acts like a tRNA, entering the A-site of stalled ribosomes, displacing the stalled mRNA. The ribosome then switches to translate the ORF on the tmRNA; the nascent peptide is terminated with the 'tag peptide' encoded by the tmRNA and targeted for degradation. The ribosome is freed to recommence translation, which seems to be the essential function of trans-translation. The sequence is that of SsrA-binding protein from Escherichia coli O139:H28 (strain E24377A / ETEC).